Consider the following 964-residue polypeptide: Protein translocase subunit SecA (964 aa).

Residues Gln86, 104–108 (GEGKT), and Asp494 contribute to the ATP site. Residues 848–964 (AESADTIAVA…YKMCHGQNEK (117 aa)) are disordered. Over residues 871–882 (AEGEVEEEDEDT) the composition is skewed to acidic residues. The segment covering 889 to 900 (AESAAASGAGES) has biased composition (low complexity). 4 residues coordinate Zn(2+): Cys947, Cys949, Cys958, and His959.

Belongs to the SecA family. As to quaternary structure, monomer and homodimer. Part of the essential Sec protein translocation apparatus which comprises SecA, SecYEG and auxiliary proteins SecDF. Other proteins may also be involved. Requires Zn(2+) as cofactor.

The protein resides in the cell membrane. The protein localises to the cytoplasm. It carries out the reaction ATP + H2O + cellular proteinSide 1 = ADP + phosphate + cellular proteinSide 2.. In terms of biological role, part of the Sec protein translocase complex. Interacts with the SecYEG preprotein conducting channel. Has a central role in coupling the hydrolysis of ATP to the transfer of proteins into and across the cell membrane, serving as an ATP-driven molecular motor driving the stepwise translocation of polypeptide chains across the membrane. This is Protein translocase subunit SecA from Bifidobacterium longum (strain NCC 2705).